Consider the following 208-residue polypeptide: Holliday junction branch migration complex subunit RuvA (208 aa).

The segment at 1–64 (MIGKLKGIVD…EDMIRLYGFR (64 aa)) is domain I. The segment at 65 to 143 (SDAEREWFRL…AFAPVDPALV (79 aa)) is domain II. A flexible linker region spans residues 144–152 (ALTGAVEDR). The domain III stretch occupies residues 153–208 (TAPQPVADAISALVNLGYPQVQASAAIAAALKGLGDGAETVEAKTLIRLGLRELAR).

Belongs to the RuvA family. In terms of assembly, homotetramer. Forms an RuvA(8)-RuvB(12)-Holliday junction (HJ) complex. HJ DNA is sandwiched between 2 RuvA tetramers; dsDNA enters through RuvA and exits via RuvB. An RuvB hexamer assembles on each DNA strand where it exits the tetramer. Each RuvB hexamer is contacted by two RuvA subunits (via domain III) on 2 adjacent RuvB subunits; this complex drives branch migration. In the full resolvosome a probable DNA-RuvA(4)-RuvB(12)-RuvC(2) complex forms which resolves the HJ.

Its subcellular location is the cytoplasm. In terms of biological role, the RuvA-RuvB-RuvC complex processes Holliday junction (HJ) DNA during genetic recombination and DNA repair, while the RuvA-RuvB complex plays an important role in the rescue of blocked DNA replication forks via replication fork reversal (RFR). RuvA specifically binds to HJ cruciform DNA, conferring on it an open structure. The RuvB hexamer acts as an ATP-dependent pump, pulling dsDNA into and through the RuvAB complex. HJ branch migration allows RuvC to scan DNA until it finds its consensus sequence, where it cleaves and resolves the cruciform DNA. The protein is Holliday junction branch migration complex subunit RuvA of Methylorubrum populi (strain ATCC BAA-705 / NCIMB 13946 / BJ001) (Methylobacterium populi).